The chain runs to 306 residues: ADP-polyphosphate phosphotransferase 2 (306 aa).

The protein belongs to the polyphosphate kinase 2 (PPK2) family. Class I subfamily.

The catalysed reaction is [phosphate](n) + ATP = [phosphate](n+1) + ADP. The enzyme catalyses [phosphate](n) + GTP = [phosphate](n+1) + GDP. Functionally, uses inorganic polyphosphate (polyP) as a donor to convert ADP to ATP. Can also convert GDP to GTP, with lower efficiency. The protein is ADP-polyphosphate phosphotransferase 2 of Rhizobium meliloti (strain 1021) (Ensifer meliloti).